Consider the following 169-residue polypeptide: Ecotin (169 aa).

A signal peptide spans 1–21 (MKKCSIILASVLLATSINAIA). A disulfide bond links Cys76 and Cys113.

This sequence belongs to the protease inhibitor I11 (ecotin) family. Homodimer.

The protein localises to the periplasm. In terms of biological role, general inhibitor of pancreatic serine proteases: inhibits chymotrypsin, trypsin, elastases, factor X, kallikrein as well as a variety of other proteases. The polypeptide is Ecotin (Yersinia pseudotuberculosis serotype O:1b (strain IP 31758)).